The sequence spans 292 residues: Tubulin beta chain (292 aa).

The GTP site is built by Asn-49 and Asn-71. The segment at 265–292 (SEYQQYQDATAEEEGEFDEEEEGDEEAA) is disordered. Over residues 274-292 (TAEEEGEFDEEEEGDEEAA) the composition is skewed to acidic residues.

It belongs to the tubulin family. As to quaternary structure, dimer of alpha and beta chains. A typical microtubule is a hollow water-filled tube with an outer diameter of 25 nm and an inner diameter of 15 nM. Alpha-beta heterodimers associate head-to-tail to form protofilaments running lengthwise along the microtubule wall with the beta-tubulin subunit facing the microtubule plus end conferring a structural polarity. Microtubules usually have 13 protofilaments but different protofilament numbers can be found in some organisms and specialized cells. The cofactor is Mg(2+).

The protein resides in the cytoplasm. Its subcellular location is the cytoskeleton. Tubulin is the major constituent of microtubules, a cylinder consisting of laterally associated linear protofilaments composed of alpha- and beta-tubulin heterodimers. Microtubules grow by the addition of GTP-tubulin dimers to the microtubule end, where a stabilizing cap forms. Below the cap, tubulin dimers are in GDP-bound state, owing to GTPase activity of alpha-tubulin. This is Tubulin beta chain from Strongylocentrotus purpuratus (Purple sea urchin).